The sequence spans 414 residues: tRNA(Ile)-lysidine synthase (414 aa).

S13–S18 is a binding site for ATP.

The protein belongs to the tRNA(Ile)-lysidine synthase family.

It localises to the cytoplasm. It catalyses the reaction cytidine(34) in tRNA(Ile2) + L-lysine + ATP = lysidine(34) in tRNA(Ile2) + AMP + diphosphate + H(+). Its function is as follows. Ligates lysine onto the cytidine present at position 34 of the AUA codon-specific tRNA(Ile) that contains the anticodon CAU, in an ATP-dependent manner. Cytidine is converted to lysidine, thus changing the amino acid specificity of the tRNA from methionine to isoleucine. The sequence is that of tRNA(Ile)-lysidine synthase from Thermotoga maritima (strain ATCC 43589 / DSM 3109 / JCM 10099 / NBRC 100826 / MSB8).